The primary structure comprises 301 residues: NADH-cytochrome b5 reductase 3 (301 aa).

A lipid anchor (N-myristoyl glycine) is attached at Gly2. An FAD-binding FR-type domain is found at 40-152; that stretch reads DIKYSLRLID…RGPNGLLVYQ (113 aa). N6-acetyllysine is present on Lys42. A Phosphotyrosine modification is found at Tyr43. Residues Arg92, Pro93, Tyr94, Val109, Lys111, and Phe114 each coordinate FAD. Lys120 carries the post-translational modification N6-acetyllysine. FAD-binding residues include Lys126, Met127, Ser128, and Thr185.

The protein belongs to the flavoprotein pyridine nucleotide cytochrome reductase family. As to quaternary structure, component of a complex composed of cytochrome b5, NADH-cytochrome b5 reductase (CYB5R3) and MTARC2. Interacts with MTLN; the interaction is required to maintain cellular lipid composition and leads to stimulation of mitochondrial respiratory complex I activity. It depends on FAD as a cofactor.

The protein localises to the endoplasmic reticulum membrane. It localises to the mitochondrion outer membrane. The enzyme catalyses 2 Fe(III)-[cytochrome b5] + NADH = 2 Fe(II)-[cytochrome b5] + NAD(+) + H(+). Functionally, catalyzes the reduction of two molecules of cytochrome b5 using NADH as the electron donor. This Macaca fascicularis (Crab-eating macaque) protein is NADH-cytochrome b5 reductase 3 (CYB5R3).